The following is a 501-amino-acid chain: Cobyric acid synthase (501 aa).

In terms of domain architecture, GATase cobBQ-type spans 252 to 443; that stretch reads DLDVAVIDLD…LHGIFDNPYW (192 aa). Cys-333 functions as the Nucleophile in the catalytic mechanism. Residue His-435 is part of the active site.

The protein belongs to the CobB/CobQ family. CobQ subfamily.

It participates in cofactor biosynthesis; adenosylcobalamin biosynthesis. Its function is as follows. Catalyzes amidations at positions B, D, E, and G on adenosylcobyrinic A,C-diamide. NH(2) groups are provided by glutamine, and one molecule of ATP is hydrogenolyzed for each amidation. In Limosilactobacillus reuteri (strain DSM 20016) (Lactobacillus reuteri), this protein is Cobyric acid synthase.